Consider the following 366-residue polypeptide: Cyclin-O protein A (366 aa).

Disordered stretches follow at residues 18–55 (AAFS…GIKK) and 80–99 (YETP…PYDS).

Belongs to the cyclin family.

It localises to the cytoplasm. Its function is as follows. Specifically required for generation of multiciliated cells, possibly by promoting a cell cycle state compatible with centriole amplification and maturation. Acts downstream of mcidas to promote mother centriole amplification and maturation in preparation for apical docking. This chain is Cyclin-O protein A (ccno-a), found in Xenopus laevis (African clawed frog).